The sequence spans 385 residues: Bifunctional chorismate mutase/prephenate dehydratase (385 aa).

The Chorismate mutase domain maps to 1–92; sequence MPSKNDLLSF…ESVLTQKKLL (92 aa). Residues Arg11, Arg28, Lys39, Asp48, Glu52, Ser84, and Gln88 each coordinate substrate. The region spanning 105–285 is the Prephenate dehydratase domain; the sequence is SFSFLGPKGS…NITRFILLSR (181 aa). The interval 286–385 is regulatory; it reads KPVSISSKIP…PSENITPIIP (100 aa). In terms of domain architecture, ACT spans 299-376; it reads TLIFNTGQES…KFIKILGCYP (78 aa).

Its subcellular location is the cytoplasm. The catalysed reaction is chorismate = prephenate. The enzyme catalyses prephenate + H(+) = 3-phenylpyruvate + CO2 + H2O. It functions in the pathway amino-acid biosynthesis; L-phenylalanine biosynthesis; phenylpyruvate from prephenate: step 1/1. It participates in metabolic intermediate biosynthesis; prephenate biosynthesis; prephenate from chorismate: step 1/1. Its function is as follows. Catalyzes the Claisen rearrangement of chorismate to prephenate and the decarboxylation/dehydration of prephenate to phenylpyruvate. The polypeptide is Bifunctional chorismate mutase/prephenate dehydratase (pheA) (Buchnera aphidicola subsp. Schizaphis graminum (strain Sg)).